The sequence spans 305 residues: tRNA N6-adenosine threonylcarbamoyltransferase (305 aa).

Fe cation contacts are provided by H108 and H112. Residues 130–134 (VVSGG), D163, G176, D180, and N264 each bind substrate. A Fe cation-binding site is contributed by D288.

This sequence belongs to the KAE1 / TsaD family. Fe(2+) serves as cofactor.

It is found in the cytoplasm. It catalyses the reaction L-threonylcarbamoyladenylate + adenosine(37) in tRNA = N(6)-L-threonylcarbamoyladenosine(37) in tRNA + AMP + H(+). Its function is as follows. Required for the formation of a threonylcarbamoyl group on adenosine at position 37 (t(6)A37) in tRNAs that read codons beginning with adenine. Is involved in the transfer of the threonylcarbamoyl moiety of threonylcarbamoyl-AMP (TC-AMP) to the N6 group of A37, together with TsaE and TsaB. TsaD likely plays a direct catalytic role in this reaction. In Mycoplasma mobile (strain ATCC 43663 / 163K / NCTC 11711) (Mesomycoplasma mobile), this protein is tRNA N6-adenosine threonylcarbamoyltransferase.